The following is a 370-amino-acid chain: Chaperone protein DnaJ (370 aa).

The J domain maps to 4–68; the sequence is DYYQVLGVSK…QKRAAYDRFG (65 aa). The CR-type zinc-finger motif lies at 133–211; the sequence is GIEKNISFSS…CHGMGRYHKQ (79 aa). 8 residues coordinate Zn(2+): Cys-146, Cys-149, Cys-163, Cys-166, Cys-185, Cys-188, Cys-199, and Cys-202. 4 CXXCXGXG motif repeats span residues 146-153, 163-170, 185-192, and 199-206; these read CDACHGTG, CDSCGGVG, CHKCQGNG, and CKKCHGMG.

Belongs to the DnaJ family. In terms of assembly, homodimer. Requires Zn(2+) as cofactor.

The protein localises to the cytoplasm. Functionally, participates actively in the response to hyperosmotic and heat shock by preventing the aggregation of stress-denatured proteins and by disaggregating proteins, also in an autonomous, DnaK-independent fashion. Unfolded proteins bind initially to DnaJ; upon interaction with the DnaJ-bound protein, DnaK hydrolyzes its bound ATP, resulting in the formation of a stable complex. GrpE releases ADP from DnaK; ATP binding to DnaK triggers the release of the substrate protein, thus completing the reaction cycle. Several rounds of ATP-dependent interactions between DnaJ, DnaK and GrpE are required for fully efficient folding. Also involved, together with DnaK and GrpE, in the DNA replication of plasmids through activation of initiation proteins. This is Chaperone protein DnaJ from Rickettsia typhi (strain ATCC VR-144 / Wilmington).